We begin with the raw amino-acid sequence, 802 residues long: Copper-exporting P-type ATPase (802 aa).

HMA domains follow at residues 5–71 (KEIA…YHVV) and 73–139 (EKAE…YKLK). Cu(+) is bound by residues C16, C19, C84, and C87. 6 consecutive transmembrane segments (helical) span residues 162 to 181 (LIFS…SHFT), 196 to 218 (WMQF…VGAY), 230 to 249 (VLVA…LTFQ), 259 to 278 (GLYY…GKLF), 412 to 434 (ISGI…WYLW), and 447 to 469 (FIAV…SIMA). The active-site 4-aspartylphosphate intermediate is the D499. 2 residues coordinate Mg(2+): D698 and D702. 2 helical membrane passes run 756–775 (LFWA…LGFL) and 779–796 (IAGA…LNAL).

Belongs to the cation transport ATPase (P-type) (TC 3.A.3) family. Type IB subfamily. In terms of assembly, monomer at sub-stoichiometric copper concentrations. Homodimer at higher copper concentrations. Forms a heterodimer (electrostatic interactions) with CopZ during the transfer of Cu(+).

It is found in the cell membrane. It catalyses the reaction Cu(+)(in) + ATP + H2O = Cu(+)(out) + ADP + phosphate + H(+). Its function is as follows. Involved in copper export. The sequence is that of Copper-exporting P-type ATPase (copA) from Bacillus subtilis (strain 168).